A 554-amino-acid polypeptide reads, in one-letter code: Membrane protein insertase YidC (554 aa).

5 consecutive transmembrane segments (helical) span residues 7–24 (VLWV…DNWQ), 362–382 (FVGN…AVFF), 436–456 (LPVV…LASV), 475–495 (PFFI…SLNP), and 510–530 (PIAF…YYVV).

This sequence belongs to the OXA1/ALB3/YidC family. Type 1 subfamily. Interacts with the Sec translocase complex via SecD. Specifically interacts with transmembrane segments of nascent integral membrane proteins during membrane integration.

The protein localises to the cell inner membrane. Its function is as follows. Required for the insertion and/or proper folding and/or complex formation of integral membrane proteins into the membrane. Involved in integration of membrane proteins that insert both dependently and independently of the Sec translocase complex, as well as at least some lipoproteins. Aids folding of multispanning membrane proteins. This Burkholderia ambifaria (strain MC40-6) protein is Membrane protein insertase YidC.